The chain runs to 105 residues: MINNNKAMLEQYNVSKLASEEKLKALAQNKNDKLLKEQTDSFEALLLKFMLDSAMKMDNPLYPKAPGDEIYASMYKDTLSKELSGNFGYSEMLFNFLKEQEKQKP.

The protein to C.jejuni CJ1463.

This is an uncharacterized protein from Helicobacter pylori (strain ATCC 700392 / 26695) (Campylobacter pylori).